Here is a 654-residue protein sequence, read N- to C-terminus: tRNA uridine 5-carboxymethylaminomethyl modification enzyme MnmG (654 aa).

17–22 is an FAD binding site; sequence GGGHAG. 289–303 is an NAD(+) binding site; it reads GPRYCPSIEDKIVKF.

It belongs to the MnmG family. In terms of assembly, homodimer. Heterotetramer of two MnmE and two MnmG subunits. Requires FAD as cofactor.

Its subcellular location is the cytoplasm. Its function is as follows. NAD-binding protein involved in the addition of a carboxymethylaminomethyl (cmnm) group at the wobble position (U34) of certain tRNAs, forming tRNA-cmnm(5)s(2)U34. This chain is tRNA uridine 5-carboxymethylaminomethyl modification enzyme MnmG, found in Prochlorococcus marinus subsp. pastoris (strain CCMP1986 / NIES-2087 / MED4).